The chain runs to 72 residues: Large ribosomal subunit protein uL29 (72 aa).

The protein belongs to the universal ribosomal protein uL29 family.

This Prochlorococcus marinus (strain MIT 9215) protein is Large ribosomal subunit protein uL29.